The following is a 221-amino-acid chain: Adenylate kinase (221 aa).

An ATP-binding site is contributed by 10–15; it reads GAGKGT. Residues 30–59 are NMP; the sequence is STGDMLRAAVKAGTPLGIEAKKVMDAGGLV. AMP contacts are provided by residues Thr-31, Arg-36, 57–59, 85–88, and Gln-92; these read GLV and GFPR. Positions 122–159 are LID; it reads GRRVHVASGRTYHVKFNPPKADMVDDETGEALIQRDDD. Residues Arg-123 and 132 to 133 each bind ATP; that span reads TY. Positions 156 and 167 each coordinate AMP. Gly-207 provides a ligand contact to ATP.

It belongs to the adenylate kinase family. As to quaternary structure, monomer.

Its subcellular location is the cytoplasm. It carries out the reaction AMP + ATP = 2 ADP. The protein operates within purine metabolism; AMP biosynthesis via salvage pathway; AMP from ADP: step 1/1. In terms of biological role, catalyzes the reversible transfer of the terminal phosphate group between ATP and AMP. Plays an important role in cellular energy homeostasis and in adenine nucleotide metabolism. This Cupriavidus metallidurans (strain ATCC 43123 / DSM 2839 / NBRC 102507 / CH34) (Ralstonia metallidurans) protein is Adenylate kinase.